The following is a 103-amino-acid chain: ATP synthase subunit c (103 aa).

A run of 3 helical transmembrane segments spans residues 3-23 (FLAL…VSGL), 30-50 (SIAG…IGMG), and 74-94 (MFIA…LALI).

This sequence belongs to the ATPase C chain family. F-type ATPases have 2 components, F(1) - the catalytic core - and F(0) - the membrane proton channel. F(1) has five subunits: alpha(3), beta(3), gamma(1), delta(1), epsilon(1). F(0) has three main subunits: a(1), b(2) and c(10-14). The alpha and beta chains form an alternating ring which encloses part of the gamma chain. F(1) is attached to F(0) by a central stalk formed by the gamma and epsilon chains, while a peripheral stalk is formed by the delta and b chains.

The protein resides in the cell inner membrane. Functionally, f(1)F(0) ATP synthase produces ATP from ADP in the presence of a proton or sodium gradient. F-type ATPases consist of two structural domains, F(1) containing the extramembraneous catalytic core and F(0) containing the membrane proton channel, linked together by a central stalk and a peripheral stalk. During catalysis, ATP synthesis in the catalytic domain of F(1) is coupled via a rotary mechanism of the central stalk subunits to proton translocation. Key component of the F(0) channel; it plays a direct role in translocation across the membrane. A homomeric c-ring of between 10-14 subunits forms the central stalk rotor element with the F(1) delta and epsilon subunits. The protein is ATP synthase subunit c of Helicobacter hepaticus (strain ATCC 51449 / 3B1).